Here is a 124-residue protein sequence, read N- to C-terminus: MRYGEMEVKNFNPEEIEVWPNRNDRHYTIKITLPEFSCLCPRSGYPDYATVYIEYVPSSLVVELKAIKLYINSFRDRHVSHEDSANEIYDLLYKKLSPKELYLKMDFNPRGNVHTIIEIDSKKN.

Residue cysteine 40 is the Thioimide intermediate of the active site. Residue aspartate 47 is the Proton donor of the active site. Residues 62-64 and 81-82 contribute to the substrate site; these read VEL and HE.

It belongs to the GTP cyclohydrolase I family. QueF type 1 subfamily.

The protein resides in the cytoplasm. It catalyses the reaction 7-aminomethyl-7-carbaguanine + 2 NADP(+) = 7-cyano-7-deazaguanine + 2 NADPH + 3 H(+). Its pathway is tRNA modification; tRNA-queuosine biosynthesis. Functionally, catalyzes the NADPH-dependent reduction of 7-cyano-7-deazaguanine (preQ0) to 7-aminomethyl-7-deazaguanine (preQ1). This is NADPH-dependent 7-cyano-7-deazaguanine reductase from Wolinella succinogenes (strain ATCC 29543 / DSM 1740 / CCUG 13145 / JCM 31913 / LMG 7466 / NCTC 11488 / FDC 602W) (Vibrio succinogenes).